A 502-amino-acid chain; its full sequence is MGDFCRRVDCKAMKFFALRSSIRTQIMASTTLLILALIGAIVTVWAKSESTLYHQEKLNDAKILSKVLSSTYANEVSEENWSQIRLNIDLLLRENEDFLYALVSDSNQKNQIAASSPDEFQNNYIPDIVSLSVTNAAINSSEKTHVVETFILRDIYFADKLRAKRGEKVMEVSSDIQTLSGRKLGKLRIGISLRKVNLAVTNAVNQALVVGFAGLNIGWICAYFLAQHLSDPVRRLQISVAKIAGGDLQHRADIHSRADEIGALATSVNEMSAALQISFNKLKKTLDSFERFVPNKFISVIAPQGIENIEVGAASTRRMTILFCDIRGYTSMSEAMEPIEIFRFLNDYLACMGKAIDEAGGFIDKYIGDAIMALFDDGNTDCALHAAILMQQALDKFNDERSMQTGKTGLPRISVGIGIHRGTVVMGTVGFTSRIDSTVIGDAVNVASRIEGLTKQYGCNILITESVVRNLSCPESFSLRLIDKSVKVKGKDEAISIYEVKA.

Residues 1–25 (MGDFCRRVDCKAMKFFALRSSIRTQ) are Cytoplasmic-facing. Residues 26–46 (IMASTTLLILALIGAIVTVWA) traverse the membrane as a helical segment. At 47–203 (KSESTLYHQE…RKVNLAVTNA (157 aa)) the chain is on the lumenal, thylakoid side. The chain crosses the membrane as a helical span at residues 204 to 226 (VNQALVVGFAGLNIGWICAYFLA). Residues 227-280 (QHLSDPVRRLQISVAKIAGGDLQHRADIHSRADEIGALATSVNEMSAALQISFN) enclose the HAMP domain. Residues 227-502 (QHLSDPVRRL…EAISIYEVKA (276 aa)) lie on the Cytoplasmic side of the membrane. In terms of domain architecture, Guanylate cyclase spans 320 to 451 (TILFCDIRGY…DAVNVASRIE (132 aa)). Asp325 and Asp369 together coordinate Mg(2+).

Belongs to the adenylyl cyclase class-3 family. The cofactor is Mg(2+).

It is found in the cellular thylakoid membrane. The catalysed reaction is ATP = 3',5'-cyclic AMP + diphosphate. In terms of biological role, may function as a membrane-localized receptor protein. In Anabaena cylindrica, this protein is Adenylate cyclase (cya).